A 165-amino-acid polypeptide reads, in one-letter code: uncharacterized protein (165 aa).

5 helical membrane passes run 30 to 50, 65 to 85, 86 to 106, 108 to 128, and 131 to 151; these read GWELLGTIGFVAFCSFYAAGG, GMVWAFFAALTAGWLASVSGL, SAFWASVITTVPFSAVVVWQG, FWLLSFIPGGFLGMTLFFASG, and WTVTLLGFLAGNCVGVISEYG.

The protein to E.coli YcdZ.

It localises to the cell membrane. This is an uncharacterized protein from Escherichia coli (strain K12).